The primary structure comprises 417 residues: Protein FAM181B (417 aa).

The segment at 104 to 147 (CSGLMGTAPPRPASPSAADAPAKRPPGAPTVATPAHCKAAPRRE) is disordered.

Belongs to the FAM181 family.

The chain is Protein FAM181B (Fam181b) from Mus musculus (Mouse).